We begin with the raw amino-acid sequence, 249 residues long: Type I iodothyronine deiodinase (249 aa).

Residues 1-12 (MELPLPGLWLKR) are Extracellular-facing. A helical; Signal-anchor for type III membrane protein transmembrane segment spans residues 13 to 33 (LWVLFQVALHVAMGKVLMTLF). At 34-249 (PGRVKQDILA…VRAVLEKLHS (216 aa)) the chain is on the cytoplasmic side. Sec-126 is a catalytic residue. Position 126 (Sec-126) is a non-standard amino acid, selenocysteine.

Belongs to the iodothyronine deiodinase family. Predominantly monomer. Can form homodimers but homodimerization is not essential for enzyme activity.

It localises to the cell membrane. It is found in the endoplasmic reticulum membrane. The protein localises to the basolateral cell membrane. The enzyme catalyses 3,3',5-triiodo-L-thyronine + iodide + A + H(+) = L-thyroxine + AH2. It catalyses the reaction 3,3',5'-triiodo-L-thyronine + iodide + A + H(+) = L-thyroxine + AH2. The catalysed reaction is 3,3'-diiodo-L-thyronine + iodide + A + H(+) = 3,3',5'-triiodo-L-thyronine + AH2. It carries out the reaction 3,3'-diiodo-L-thyronine + iodide + A + H(+) = 3,3',5-triiodo-L-thyronine + AH2. The enzyme catalyses 3'-iodo-L-thyronine + iodide + A + H(+) = 3',5'-diiodo-L-thyronine + AH2. It catalyses the reaction 3-iodo-L-thyronine + iodide + A + H(+) = 3,5-diiodo-L-thyronine + AH2. The catalysed reaction is 3-iodo-L-thyronine + iodide + A + H(+) = 3,3'-diiodo-L-thyronine + AH2. It carries out the reaction 3,3'-diiodothyronamine + iodide + A + H(+) = 3,3',5'-triiodothyronamine + AH2. The enzyme catalyses 3'-iodothyronamine + iodide + A + H(+) = 3',5'-diiodothyronamine + AH2. It catalyses the reaction 3-iodothyronamine + iodide + A + H(+) = 3,3'-diiodothyronamine + AH2. The catalysed reaction is 3,3'-diiodothyronamine + iodide + A + H(+) = 3,3',5-triiodothyronamine + AH2. It carries out the reaction 3-iodothyronamine + iodide + A + H(+) = 3,5-diiodothyronamine + AH2. The enzyme catalyses 3,3'-diiodo-L-thyronine sulfate + iodide + A + H(+) = 3,3',5'-triiodo-L-thyronine sulfate + AH2. It catalyses the reaction 3,3',5'-triiodo-L-thyronine sulfate + iodide + A + H(+) = L-thyroxine sulfate + AH2. The catalysed reaction is 3,3'-diiodo-L-thyronine sulfate + iodide + A + H(+) = 3,3',5-triiodo-L-thyronine sulfate + AH2. Its function is as follows. Plays a crucial role in the metabolism of thyroid hormones (TH) and has specific roles in TH activation and inactivation by deiodination. Catalyzes the deiodination of L-thyroxine (T4) to 3,5,3'-triiodothyronine (T3) and 3,3',5'-triiodothyronine (rT3) to 3,3'-diiodothyronine (3,3'-T2) via outer-ring deiodination (ORD). Catalyzes the deiodination of T4 to rT3, T3 to 3,3'-T2, 3,5-diiodothyronine (3,5-T2) to 3-monoiodothyronine (3-T1) and 3,3'-T2 to 3-T1 via inner-ring deiodination (IRD). Catalyzes the deiodination of 3',5'-diiodothyronine (3',5'-T2) to 3'-monoiodothyronine (3'-T1) via ORD. Catalyzes the phenolic ring deiodinations of 3,3',5'-triiodothyronamine, 3',5'-diiodothyronamine and 3,3'-diiodothyronamine as well as tyrosyl ring deiodinations of 3,5,3'-triiodothyronamine and 3,5-diiodothyronamine. Catalyzes the deiodination of L-thyroxine sulfate and 3,3',5-triiodo-L-thyronine sulfate via IRD and of 3,3',5'-triiodo-L-thyronine sulfate via ORD. This is Type I iodothyronine deiodinase (DIO1) from Sus scrofa (Pig).